A 549-amino-acid polypeptide reads, in one-letter code: Oxygen-dependent choline dehydrogenase (549 aa).

4-33 contributes to the FAD binding site; sequence DFVIIGSGSAGSAMAYRLSENGRYSVIVIE. His465 serves as the catalytic Proton acceptor.

It belongs to the GMC oxidoreductase family. FAD serves as cofactor.

It catalyses the reaction choline + A = betaine aldehyde + AH2. The enzyme catalyses betaine aldehyde + NAD(+) + H2O = glycine betaine + NADH + 2 H(+). It functions in the pathway amine and polyamine biosynthesis; betaine biosynthesis via choline pathway; betaine aldehyde from choline (cytochrome c reductase route): step 1/1. Its function is as follows. Involved in the biosynthesis of the osmoprotectant glycine betaine. Catalyzes the oxidation of choline to betaine aldehyde and betaine aldehyde to glycine betaine at the same rate. In Brucella suis biovar 1 (strain 1330), this protein is Oxygen-dependent choline dehydrogenase.